A 369-amino-acid chain; its full sequence is MSLTRVSVTAVRNLHPVTLSPSPRINILYGDNGSGKTSVLEAIHLLGLARSFRSARLQPVIQYEEAACTVFGQVMLANGIASNLGISRERQGEFTIRIDGQNARSAAQLAETLPLQLINPDSFRLLEGAPKIRRQFLDWGVFHVEPRFLPVWQRLQKALRQRNSWLRHGKLDPASQAAWDRELSLASDEIDAYRRSYIQALKPVFEETLAELVSLDDLTLSYYRGWDKDRDLLEVLASSLLRDQQMGHTQAGPQRADLRIRLAGHNAAEILSRGQQKLVVCALRIAQGHLINRAKRGQCVYLVDDLPSELDEQHRMALCRLLEDLGCQVFITCVDPQLLKDGWRTDTPVSMFHVEHGKVSQTTTIGSEA.

30 to 37 (GDNGSGKT) is a binding site for ATP.

The protein belongs to the RecF family.

Its subcellular location is the cytoplasm. Functionally, the RecF protein is involved in DNA metabolism; it is required for DNA replication and normal SOS inducibility. RecF binds preferentially to single-stranded, linear DNA. It also seems to bind ATP. The protein is DNA replication and repair protein RecF of Pseudomonas aeruginosa (strain UCBPP-PA14).